The following is a 312-amino-acid chain: DNA-directed RNA polymerase subunit alpha (312 aa).

The tract at residues 1-226 is alpha N-terminal domain (alpha-NTD); sequence MIEFEKPNIT…EHFKVFMSTD (226 aa). Residues 243–312 are alpha C-terminal domain (alpha-CTD); sequence NEKKLEMTIE…ELGLSLRQDD (70 aa).

Belongs to the RNA polymerase alpha chain family. Homodimer. The RNAP catalytic core consists of 2 alpha, 1 beta, 1 beta' and 1 omega subunit. When a sigma factor is associated with the core the holoenzyme is formed, which can initiate transcription.

The catalysed reaction is RNA(n) + a ribonucleoside 5'-triphosphate = RNA(n+1) + diphosphate. Functionally, DNA-dependent RNA polymerase catalyzes the transcription of DNA into RNA using the four ribonucleoside triphosphates as substrates. In Lactobacillus gasseri (strain ATCC 33323 / DSM 20243 / BCRC 14619 / CIP 102991 / JCM 1131 / KCTC 3163 / NCIMB 11718 / NCTC 13722 / AM63), this protein is DNA-directed RNA polymerase subunit alpha.